The chain runs to 677 residues: WD repeat-containing protein 43 (677 aa).

WD repeat units lie at residues 11 to 51 (PLAP…LHQE), 57 to 119 (HLSG…LHSK), 124 to 163 (GHDN…VKCK), 166 to 205 (GDNS…RHFT), 207 to 259 (HATP…KEKS), and 267 to 309 (TDEP…YCKK). At serine 77 the chain carries Phosphoserine. Residue lysine 309 forms a Glycyl lysine isopeptide (Lys-Gly) (interchain with G-Cter in SUMO1); alternate linkage. A Glycyl lysine isopeptide (Lys-Gly) (interchain with G-Cter in SUMO2); alternate cross-link involves residue lysine 309. Residue threonine 321 is modified to Phosphothreonine. Residue lysine 384 forms a Glycyl lysine isopeptide (Lys-Gly) (interchain with G-Cter in SUMO1); alternate linkage. A Glycyl lysine isopeptide (Lys-Gly) (interchain with G-Cter in SUMO2); alternate cross-link involves residue lysine 384. A Phosphothreonine modification is found at threonine 394. Serine 399, serine 431, serine 437, and serine 590 each carry phosphoserine. Disordered regions lie at residues 414–445 (AIKP…LGAM) and 582–677 (SEKT…SEEE). Residues 582-592 (SEKTKGATSPG) show a composition bias toward polar residues. Acidic residues predominate over residues 600–652 (EEESSEEESDDEIADKDSEDNWDEDEEESESEKDEDVEEEDEDAEGKDEENGE). Basic and acidic residues predominate over residues 653–663 (DRDTASEKELN). The residue at position 656 (threonine 656) is a Phosphothreonine. The residue at position 658 (serine 658) is a Phosphoserine. Acidic residues predominate over residues 664 to 677 (GDSDLDPENESEEE).

It belongs to the UTP5 family. As to quaternary structure, part of the small subunit (SSU) processome, composed of more than 70 proteins and the RNA chaperone small nucleolar RNA (snoRNA) U3. May be a component of the proposed t-UTP subcomplex of the ribosomal small subunit (SSU) processome containing at least UTP4, WDR43, HEATR1, UTP15, WDR75. Binds to RNA; binding is required for its chromatin association. Interacts with CDK9, DDX21 and SUPT6H. Interacts with RNA polymerase II. Interacts directly with UTP4 and UTP15.

It localises to the nucleus. It is found in the nucleolus. The protein localises to the nucleolus fibrillar center. Its subcellular location is the nucleoplasm. In terms of biological role, ribosome biogenesis factor that coordinates hyperactive transcription and ribogenesis. Part of the small subunit (SSU) processome, first precursor of the small eukaryotic ribosomal subunit. During the assembly of the SSU processome in the nucleolus, many ribosome biogenesis factors, an RNA chaperone and ribosomal proteins associate with the nascent pre-rRNA and work in concert to generate RNA folding, modifications, rearrangements and cleavage as well as targeted degradation of pre-ribosomal RNA by the RNA exosome. Involved in nucleolar processing of pre-18S ribosomal RNA. Required for optimal pre-ribosomal RNA transcription by RNA polymerase I. Essential for stem cell pluripotency and embryonic development. In the nucleoplasm, recruited by promoter-associated/nascent transcripts and transcription to active promoters where it facilitates releases of elongation factor P-TEFb and paused RNA polymerase II to allow transcription elongation and maintain high-level expression of its targets genes. In Homo sapiens (Human), this protein is WD repeat-containing protein 43.